Here is a 312-residue protein sequence, read N- to C-terminus: Phospholipid phosphatase 3 (312 aa).

Topologically, residues 1 to 33 (MQSYKYDKAIVPESKNGGSPALNNNPRKGGSKR) are cytoplasmic. Ser-19 is modified (phosphoserine). A helical transmembrane segment spans residues 34 to 54 (VLLICLDLFCLFMAALPFLII). The Extracellular portion of the chain corresponds to 55–85 (ETSTIKPYRRGFYCNDESIKYPLKVSETIND). The helical transmembrane segment at 86–106 (AVLCAVGIVIAILAIITGEFY) threads the bilayer. Over 107-123 (RIYYLKEKSRSTTQNPY) the chain is Cytoplasmic. The Dityrosine basolateral targeting motif signature appears at 109–110 (YY). A helical transmembrane segment spans residues 124–144 (VAALYKQVGCFLFGCAISQSF). Topologically, residues 145–194 (TDIAKVSIGRLRPHFLSVCDPDFSQINCSEGYIQNYRCRGEDSKVQEARK) are extracellular. Residues 149–157 (KVSIGRLRP) form a phosphatase sequence motif I region. Asn-171 carries N-linked (GlcNAc...) asparagine glycosylation. The short motif at 183-185 (RGE) is the Integrin-binding motif element. A helical membrane pass occupies residues 195 to 215 (SFFSGHASFSMFTMLYLVLYL). Residues 197 to 200 (FSGH) are phosphatase sequence motif II. Catalysis depends on His-200, which acts as the Proton donors. Residues 216 to 226 (QARFTWRGARL) lie on the Cytoplasmic side of the membrane. The chain crosses the membrane as a helical span at residues 227 to 244 (LRPLLQFTLLMMAFYTGL). Residues 245-256 (SRVSDYKHHPSD) are phosphatase sequence motif III. Residues 245–258 (SRVSDYKHHPSDVL) are Extracellular-facing. The Nucleophile role is filled by His-252. The chain crosses the membrane as a helical span at residues 259 to 279 (AGFAQGALVACCIVFFVSDLF). The tract at residues 276 to 312 (SDLFKTKTSLSLPAPAIRREILSPVDIIDRNNHHNMV) is mediates interaction with CTNND1. Topologically, residues 280 to 312 (KTKTSLSLPAPAIRREILSPVDIIDRNNHHNMV) are cytoplasmic.

This sequence belongs to the PA-phosphatase related phosphoesterase family. As to quaternary structure, forms functional homodimers and homooligomers that are not required for substrate recognition and catalytic activity. Can also form heterooligomers with other PLPP2 and PLPP3. Interacts with CTNND1; negatively regulates the PLPP3-mediated stabilization of beta-catenin/CTNNB1. In terms of processing, N-glycosylated. Contains high-mannose oligosaccharides. In terms of tissue distribution, detected in lung, cerebellum and heart atrium.

Its subcellular location is the cell membrane. The protein localises to the basolateral cell membrane. The protein resides in the endoplasmic reticulum membrane. It localises to the endoplasmic reticulum-Golgi intermediate compartment membrane. It is found in the golgi apparatus membrane. Its subcellular location is the golgi apparatus. The protein localises to the trans-Golgi network membrane. The protein resides in the membrane raft. It carries out the reaction a 1,2-diacyl-sn-glycero-3-phosphate + H2O = a 1,2-diacyl-sn-glycerol + phosphate. It catalyses the reaction 1,2-dihexadecanoyl-sn-glycero-3-phosphate + H2O = 1,2-dihexadecanoyl-sn-glycerol + phosphate. The catalysed reaction is 1,2-di-(9Z-octadecenoyl)-sn-glycero-3-phosphate + H2O = 1,2-di-(9Z-octadecenoyl)-sn-glycerol + phosphate. The enzyme catalyses a monoacyl-sn-glycero-3-phosphate + H2O = a monoacylglycerol + phosphate. It carries out the reaction (9Z)-octadecenoyl-sn-glycero-3-phosphate + H2O = (9Z-octadecenoyl)-glycerol + phosphate. It catalyses the reaction sphing-4-enine 1-phosphate + H2O = sphing-4-enine + phosphate. The catalysed reaction is an N-acylsphing-4-enine 1-phosphate + H2O = an N-acylsphing-4-enine + phosphate. The enzyme catalyses N-(octanoyl)-sphing-4-enine-1-phosphate + H2O = N-octanoylsphing-4-enine + phosphate. It carries out the reaction N-(9Z-octadecenoyl)-ethanolamine phosphate + H2O = N-(9Z-octadecenoyl) ethanolamine + phosphate. It participates in lipid metabolism; phospholipid metabolism. With respect to regulation, magnesium-independent phospholipid phosphatase. Insensitive to N-ethylmaleimide. Functionally, magnesium-independent phospholipid phosphatase of the plasma membrane that catalyzes the dephosphorylation of a variety of glycerolipid and sphingolipid phosphate esters including phosphatidate/PA, lysophosphatidate/LPA, diacylglycerol pyrophosphate/DGPP, sphingosine 1-phosphate/S1P and ceramide 1-phosphate/C1P. Also acts on N-oleoyl ethanolamine phosphate/N-(9Z-octadecenoyl)-ethanolamine phosphate, a potential physiological compound. Has both an extracellular and an intracellular phosphatase activity, allowing the hydrolysis and the cellular uptake of these bioactive lipid mediators from the milieu, regulating signal transduction in different cellular processes. Through the dephosphorylation of extracellular sphingosine-1-phosphate and the regulation of its extra- and intracellular availability, plays a role in vascular homeostasis, regulating endothelial cell migration, adhesion, survival, proliferation and the production of pro-inflammatory cytokines. By maintaining the appropriate levels of this lipid in the cerebellum, also ensure its proper development and function. Through its intracellular lipid phosphatase activity may act in early compartments of the secretory pathway, regulating the formation of Golgi to endoplasmic reticulum retrograde transport carriers. Its function is as follows. Independently of this phosphatase activity may also function in the Wnt signaling pathway and the stabilization of beta-catenin/CTNNB1, thereby regulating cell proliferation, migration and differentiation in angiogenesis or yet in tumor growth. Also plays a role in integrin-mediated cell-cell adhesion in angiogenesis. This Mus musculus (Mouse) protein is Phospholipid phosphatase 3.